Here is a 150-residue protein sequence, read N- to C-terminus: MRLYIGSLLICVLLGIVPFATANTNRSGYEEHRNYLLNIFHNPLVNDSIKEKNIPELIAFYQRYPTDIPLSDADRQQFERFIHDYREYREVLVDGVPPQGGSFGNIFGHFLGRVGTRYISSLFNKKREEGQSNHANSPTTSPSRIQKMTK.

The signal sequence occupies residues 1-22; sequence MRLYIGSLLICVLLGIVPFATA. The tract at residues 127–150 is disordered; the sequence is REEGQSNHANSPTTSPSRIQKMTK. The span at 132–150 shows a compositional bias: polar residues; sequence SNHANSPTTSPSRIQKMTK.

Belongs to the Turandot family.

It localises to the secreted. A humoral factor that may play a role in stress tolerance. The chain is Protein Turandot X1/X2 from Drosophila sechellia (Fruit fly).